We begin with the raw amino-acid sequence, 382 residues long: 1-deoxy-D-xylulose 5-phosphate reductoisomerase (382 aa).

Residues Thr10, Gly11, Ser12, Ile13, Asn38, and Asn120 each coordinate NADPH. A 1-deoxy-D-xylulose 5-phosphate-binding site is contributed by Lys121. Glu122 lines the NADPH pocket. Asp146 is a Mn(2+) binding site. Positions 147, 148, 172, and 195 each coordinate 1-deoxy-D-xylulose 5-phosphate. Residue Glu148 participates in Mn(2+) binding. Residue Gly201 participates in NADPH binding. 1-deoxy-D-xylulose 5-phosphate-binding residues include Ser208, Asn213, Lys214, and Glu217. Glu217 lines the Mn(2+) pocket.

This sequence belongs to the DXR family. It depends on Mg(2+) as a cofactor. The cofactor is Mn(2+).

It carries out the reaction 2-C-methyl-D-erythritol 4-phosphate + NADP(+) = 1-deoxy-D-xylulose 5-phosphate + NADPH + H(+). It functions in the pathway isoprenoid biosynthesis; isopentenyl diphosphate biosynthesis via DXP pathway; isopentenyl diphosphate from 1-deoxy-D-xylulose 5-phosphate: step 1/6. Functionally, catalyzes the NADPH-dependent rearrangement and reduction of 1-deoxy-D-xylulose-5-phosphate (DXP) to 2-C-methyl-D-erythritol 4-phosphate (MEP). This chain is 1-deoxy-D-xylulose 5-phosphate reductoisomerase, found in Thermoanaerobacter pseudethanolicus (strain ATCC 33223 / 39E) (Clostridium thermohydrosulfuricum).